A 362-amino-acid polypeptide reads, in one-letter code: Chalcone synthase A (362 aa).

Cysteine 168 is a catalytic residue.

The protein belongs to the thiolase-like superfamily. Chalcone/stilbene synthases family.

The catalysed reaction is (E)-4-coumaroyl-CoA + 3 malonyl-CoA + 3 H(+) = 2',4,4',6'-tetrahydroxychalcone + 3 CO2 + 4 CoA. Its pathway is secondary metabolite biosynthesis; flavonoid biosynthesis. Its function is as follows. The primary product of this enzyme is 4,2',4',6'-tetrahydroxychalcone (also termed naringenin-chalcone or chalcone) which can under specific conditions spontaneously isomerize into naringenin. The chain is Chalcone synthase A (CHSA) from Ipomoea platensis (Morning glory).